The chain runs to 428 residues: tRNA modification GTPase MnmE (428 aa).

(6S)-5-formyl-5,6,7,8-tetrahydrofolate is bound by residues Arg-20, Glu-77, and Lys-117. Residues Gly-213 to Lys-351 enclose the TrmE-type G domain. Asn-223 provides a ligand contact to K(+). GTP is bound by residues Asn-223–Thr-228, Ser-242–Thr-248, and Asp-267–Gly-270. Ser-227 contacts Mg(2+). Positions 242, 244, and 247 each coordinate K(+). Position 248 (Thr-248) interacts with Mg(2+). Lys-428 lines the (6S)-5-formyl-5,6,7,8-tetrahydrofolate pocket.

Belongs to the TRAFAC class TrmE-Era-EngA-EngB-Septin-like GTPase superfamily. TrmE GTPase family. Homodimer. Heterotetramer of two MnmE and two MnmG subunits. It depends on K(+) as a cofactor.

It localises to the cytoplasm. In terms of biological role, exhibits a very high intrinsic GTPase hydrolysis rate. Involved in the addition of a carboxymethylaminomethyl (cmnm) group at the wobble position (U34) of certain tRNAs, forming tRNA-cmnm(5)s(2)U34. The chain is tRNA modification GTPase MnmE from Ruegeria pomeroyi (strain ATCC 700808 / DSM 15171 / DSS-3) (Silicibacter pomeroyi).